Reading from the N-terminus, the 292-residue chain is Cyclin-dependent kinase A-2 (292 aa).

The region spanning tyrosine 4–phenylalanine 286 is the Protein kinase domain. ATP is bound by residues isoleucine 10–valine 18 and lysine 33. The residue at position 14 (threonine 14) is a Phosphothreonine. Position 15 is a phosphotyrosine (tyrosine 15). Catalysis depends on aspartate 126, which acts as the Proton acceptor. Phosphothreonine is present on threonine 160.

This sequence belongs to the protein kinase superfamily. CMGC Ser/Thr protein kinase family. CDC2/CDKX subfamily. Expressed in the dividing region of the root apex and in differentiated cells such as those in the sclerenchyma, pericycle and parenchyma of the central cylinder. Expressed in the intercalary meristem and the elongation zone of internodes.

It catalyses the reaction L-seryl-[protein] + ATP = O-phospho-L-seryl-[protein] + ADP + H(+). The catalysed reaction is L-threonyl-[protein] + ATP = O-phospho-L-threonyl-[protein] + ADP + H(+). The enzyme catalyses [DNA-directed RNA polymerase] + ATP = phospho-[DNA-directed RNA polymerase] + ADP + H(+). This is Cyclin-dependent kinase A-2 (CDKA-2) from Oryza sativa subsp. japonica (Rice).